Reading from the N-terminus, the 308-residue chain is Cytochrome b (308 aa).

Helical transmembrane passes span 1–21, 45–66, 81–101, and 146–166; these read FGSL…LLAT, WLIR…YLHI, WNTG…GYVL, and FFAL…VHLT. Heme b contacts are provided by H51 and H65. Positions 150 and 164 each coordinate heme b. Residue H169 participates in a ubiquinone binding. Helical transmembrane passes span 194-214, 256-276, and 288-308; these read MKDI…ALFS, LGGV…PLLH, and LSQI…WVGS.

This sequence belongs to the cytochrome b family. In terms of assembly, the cytochrome bc1 complex contains 11 subunits: 3 respiratory subunits (MT-CYB, CYC1 and UQCRFS1), 2 core proteins (UQCRC1 and UQCRC2) and 6 low-molecular weight proteins (UQCRH/QCR6, UQCRB/QCR7, UQCRQ/QCR8, UQCR10/QCR9, UQCR11/QCR10 and a cleavage product of UQCRFS1). This cytochrome bc1 complex then forms a dimer. It depends on heme b as a cofactor.

Its subcellular location is the mitochondrion inner membrane. Functionally, component of the ubiquinol-cytochrome c reductase complex (complex III or cytochrome b-c1 complex) that is part of the mitochondrial respiratory chain. The b-c1 complex mediates electron transfer from ubiquinol to cytochrome c. Contributes to the generation of a proton gradient across the mitochondrial membrane that is then used for ATP synthesis. This Amblyornis macgregoriae (Macgregor's bowerbird) protein is Cytochrome b (MT-CYB).